Consider the following 583-residue polypeptide: cAMP-dependent protein kinase catalytic subunit 3 (583 aa).

Disordered stretches follow at residues 51 to 75 (ATPT…TIGK) and 98 to 264 (SGTA…QTAK). Composition is skewed to polar residues over residues 52-69 (TPTQ…TGTP) and 98-107 (SGTAGSTSKL). The span at 108 to 162 (TTGNGSGNTMTSAYKIPSNNSTTANDSSNTETTFTFKLGRSNGRSSSNVASSESS) shows a compositional bias: low complexity. The segment covering 163–176 (DPLESDYSEEDPEQ) has biased composition (acidic residues). A compositionally biased stretch (low complexity) spans 181 to 200 (PDPATNSRSSSTATTTTTSS). Residues 205–219 (NDVDEEDEEDDENEG) are compositionally biased toward acidic residues. The span at 221–234 (GNGRDADDATHDSS) shows a compositional bias: basic and acidic residues. Over residues 235-256 (ESIEEDDGNETDDEEDDDESEE) the composition is skewed to acidic residues. A Protein kinase domain is found at 274 to 528 (YQIIKTVGTG…ADDVKRHRWF (255 aa)). Residues 280-288 (VGTGTFGRV) and K303 contribute to the ATP site. The active-site Proton acceptor is the D397. An AGC-kinase C-terminal domain is found at 529 to 583 (KHLNWNDVYSKKLKPPILPDVHHDGDTKNFDDYPEKDWKPAKAVDQRDLQYFNDF).

The protein belongs to the protein kinase superfamily. AGC Ser/Thr protein kinase family. cAMP subfamily. In terms of tissue distribution, expressed in embryonic mesoderm, and the optic lamina, wing disk and leg disks of third instar larvae. More abundant in adult head than adult body.

The catalysed reaction is L-seryl-[protein] + ATP = O-phospho-L-seryl-[protein] + ADP + H(+). It catalyses the reaction L-threonyl-[protein] + ATP = O-phospho-L-threonyl-[protein] + ADP + H(+). Functionally, does not have an essential role in development. This is cAMP-dependent protein kinase catalytic subunit 3 (Pka-C3) from Drosophila melanogaster (Fruit fly).